The sequence spans 263 residues: tRNA pseudouridine synthase A (263 aa).

Residue Asp-51 is the Nucleophile of the active site. A substrate-binding site is contributed by Tyr-109.

Belongs to the tRNA pseudouridine synthase TruA family. As to quaternary structure, homodimer.

The enzyme catalyses uridine(38/39/40) in tRNA = pseudouridine(38/39/40) in tRNA. Its function is as follows. Formation of pseudouridine at positions 38, 39 and 40 in the anticodon stem and loop of transfer RNAs. The polypeptide is tRNA pseudouridine synthase A (Pseudoalteromonas atlantica (strain T6c / ATCC BAA-1087)).